The sequence spans 239 residues: UPF0173 metal-dependent hydrolase Msm_0779 (239 aa).

Belongs to the UPF0173 family.

This is UPF0173 metal-dependent hydrolase Msm_0779 from Methanobrevibacter smithii (strain ATCC 35061 / DSM 861 / OCM 144 / PS).